Consider the following 513-residue polypeptide: UDP-N-acetylmuramyl-tripeptide synthetase (513 aa).

UDP-N-acetyl-alpha-D-muramoyl-L-alanyl-D-glutamate is bound at residue Ser-38. An ATP-binding site is contributed by 115 to 121; that stretch reads GTKGKTT. UDP-N-acetyl-alpha-D-muramoyl-L-alanyl-D-glutamate is bound by residues 161–162, Ser-188, and Arg-196; that span reads TT. Lys-230 is modified (N6-carboxylysine).

It belongs to the MurCDEF family. MurE subfamily. Post-translationally, carboxylation is probably crucial for Mg(2+) binding and, consequently, for the gamma-phosphate positioning of ATP.

The protein localises to the cytoplasm. It participates in cell wall biogenesis; peptidoglycan biosynthesis. Its function is as follows. Catalyzes the addition of an amino acid to the nucleotide precursor UDP-N-acetylmuramoyl-L-alanyl-D-glutamate (UMAG) in the biosynthesis of bacterial cell-wall peptidoglycan. The chain is UDP-N-acetylmuramyl-tripeptide synthetase from Latilactobacillus sakei subsp. sakei (strain 23K) (Lactobacillus sakei subsp. sakei).